We begin with the raw amino-acid sequence, 150 residues long: Large ribosomal subunit protein bL9 (150 aa).

It belongs to the bacterial ribosomal protein bL9 family.

In terms of biological role, binds to the 23S rRNA. In Shewanella baltica (strain OS155 / ATCC BAA-1091), this protein is Large ribosomal subunit protein bL9.